We begin with the raw amino-acid sequence, 607 residues long: Ceramide kinase (607 aa).

The 224-residue stretch at 135-358 (DRPKSLMVFV…LDIAQVVRWK (224 aa)) folds into the DAGKc domain. ATP-binding positions include 145–149 (HPLCG), threonine 176, and 205–211 (GDGLFNE). 204 to 207 (GGDG) lines the substrate pocket. Aspartate 206 (proton donor/acceptor) is an active-site residue. Residues 247 to 297 (NDLSNSELTGDDANAISGSSNTPDDHEPLLSTTRSTGLDISSSDSSDEPCN) form a disordered region. Residues 276–286 (LSTTRSTGLDI) show a composition bias toward polar residues. Serine 320 provides a ligand contact to ATP. The CXXXCXXC signature appears at 454 to 461 (CRTNCLIC).

It depends on Ca(2+) as a cofactor. The cofactor is Mg(2+). In terms of tissue distribution, highly expressed in leaves and at lower levels in stems.

The catalysed reaction is an N-acylsphing-4-enine + ATP = an N-acylsphing-4-enine 1-phosphate + ADP + H(+). Its function is as follows. Catalyzes specifically the phosphorylation of ceramide to form ceramide 1-phosphate. Possesses activity on ceramide analog (C6 synthetic ceramide) in vitro. Ceramide is a critical sphingolipid metabolite that induces programmed cell death (PCD) in plants and ceramide-1-phosphate has a PCD suppressive effect. Thus, ceramide phosphorylation plays a role in the modulation of PCD and CERK activity is crucial for the maintenance of cell viability. The sequence is that of Ceramide kinase (CERK) from Oryza sativa subsp. japonica (Rice).